A 328-amino-acid chain; its full sequence is uncharacterized protein (328 aa).

This is an uncharacterized protein from Bacillus anthracis.